The primary structure comprises 392 residues: Bifunctional enzyme Fae/Hps (392 aa).

The tract at residues 1-161 is formaldehyde-activating enzyme; it reads MFQIGEALMG…EESNKSTHAI (161 aa). Histidine 17 (proton donor) is an active-site residue. Residues aspartate 19, leucine 48, lysine 66, threonine 68, and glutamine 83 each contribute to the substrate site. The tract at residues 162–392 is 3-hexulose-6-phosphate synthase; it reads MGFKVTRLWD…IDQFRVMTDF (231 aa).

In the N-terminal section; belongs to the formaldehyde-activating enzyme family. This sequence in the C-terminal section; belongs to the HPS/KGPDC family. HPS subfamily.

It carries out the reaction 5,6,7,8-tetrahydromethanopterin + formaldehyde = 5,10-methylenetetrahydromethanopterin + H2O. The enzyme catalyses D-ribulose 5-phosphate + formaldehyde = D-arabino-hex-3-ulose 6-phosphate. Its pathway is carbohydrate biosynthesis; D-ribose 5-phosphate biosynthesis. Catalyzes the condensation of formaldehyde with tetrahydromethanopterin (H(4)MPT) to 5,10-methylenetetrahydromethanopterin. Its function is as follows. Catalyzes the reversible formation of ribulose-5-phosphate and formaldehyde from 3-hexulose-6-phosphate. The protein is Bifunctional enzyme Fae/Hps of Methanosarcina barkeri (strain Fusaro / DSM 804).